The sequence spans 332 residues: Holliday junction branch migration complex subunit RuvB (332 aa).

The segment at 1-181 (MSRILDNEMM…FGITGHMEYY (181 aa)) is large ATPase domain (RuvB-L). ATP contacts are provided by residues Leu20, Arg21, Gly62, Lys65, Thr66, Thr67, 128–130 (EDF), Arg171, Tyr181, and Arg218. Mg(2+) is bound at residue Thr66. The tract at residues 182-252 (AHADLTEIVE…ITDKALTMLD (71 aa)) is small ATPAse domain (RuvB-S). Positions 255–332 (HEGLDYVDQK…EHLGYEYSEK (78 aa)) are head domain (RuvB-H). Positions 291, 310, 312, and 315 each coordinate DNA.

This sequence belongs to the RuvB family. As to quaternary structure, homohexamer. Forms an RuvA(8)-RuvB(12)-Holliday junction (HJ) complex. HJ DNA is sandwiched between 2 RuvA tetramers; dsDNA enters through RuvA and exits via RuvB. An RuvB hexamer assembles on each DNA strand where it exits the tetramer. Each RuvB hexamer is contacted by two RuvA subunits (via domain III) on 2 adjacent RuvB subunits; this complex drives branch migration. In the full resolvosome a probable DNA-RuvA(4)-RuvB(12)-RuvC(2) complex forms which resolves the HJ.

It is found in the cytoplasm. It carries out the reaction ATP + H2O = ADP + phosphate + H(+). Functionally, the RuvA-RuvB-RuvC complex processes Holliday junction (HJ) DNA during genetic recombination and DNA repair, while the RuvA-RuvB complex plays an important role in the rescue of blocked DNA replication forks via replication fork reversal (RFR). RuvA specifically binds to HJ cruciform DNA, conferring on it an open structure. The RuvB hexamer acts as an ATP-dependent pump, pulling dsDNA into and through the RuvAB complex. RuvB forms 2 homohexamers on either side of HJ DNA bound by 1 or 2 RuvA tetramers; 4 subunits per hexamer contact DNA at a time. Coordinated motions by a converter formed by DNA-disengaged RuvB subunits stimulates ATP hydrolysis and nucleotide exchange. Immobilization of the converter enables RuvB to convert the ATP-contained energy into a lever motion, pulling 2 nucleotides of DNA out of the RuvA tetramer per ATP hydrolyzed, thus driving DNA branch migration. The RuvB motors rotate together with the DNA substrate, which together with the progressing nucleotide cycle form the mechanistic basis for DNA recombination by continuous HJ branch migration. Branch migration allows RuvC to scan DNA until it finds its consensus sequence, where it cleaves and resolves cruciform DNA. This Streptococcus pneumoniae serotype 19F (strain G54) protein is Holliday junction branch migration complex subunit RuvB.